A 479-amino-acid polypeptide reads, in one-letter code: Putative F-box protein At1g67390 (479 aa).

Positions 40–88 (DDRISKLPDDVLVMILASLSTEDALKTSVLSTRWKNVWKQVPYLHFDLL) constitute an F-box domain.

This chain is Putative F-box protein At1g67390, found in Arabidopsis thaliana (Mouse-ear cress).